The chain runs to 70 residues: Translation initiation factor IF-1 (70 aa).

The 70-residue stretch at Met1 to Lys70 folds into the S1-like domain.

It belongs to the IF-1 family. As to quaternary structure, component of the 30S ribosomal translation pre-initiation complex which assembles on the 30S ribosome in the order IF-2 and IF-3, IF-1 and N-formylmethionyl-tRNA(fMet); mRNA recruitment can occur at any time during PIC assembly.

It localises to the cytoplasm. One of the essential components for the initiation of protein synthesis. Stabilizes the binding of IF-2 and IF-3 on the 30S subunit to which N-formylmethionyl-tRNA(fMet) subsequently binds. Helps modulate mRNA selection, yielding the 30S pre-initiation complex (PIC). Upon addition of the 50S ribosomal subunit IF-1, IF-2 and IF-3 are released leaving the mature 70S translation initiation complex. The protein is Translation initiation factor IF-1 of Mycoplasma genitalium (strain ATCC 33530 / DSM 19775 / NCTC 10195 / G37) (Mycoplasmoides genitalium).